We begin with the raw amino-acid sequence, 434 residues long: BEN domain-containing protein 7 (434 aa).

Glycyl lysine isopeptide (Lys-Gly) (interchain with G-Cter in SUMO2) cross-links involve residues K16, K56, and K85. Disordered stretches follow at residues 96 to 151 (PQRS…SNGE) and 212 to 262 (SRKR…ERTS). The segment covering 97 to 150 (QRSNSSTEASQGLHSNSRGAWNELPTQSGQFSGQSGPRSRTFQTQPHISASSNG) has biased composition (polar residues). Positions 212–222 (SRKRNKKKKVL) are enriched in basic residues. A Glycyl lysine isopeptide (Lys-Gly) (interchain with G-Cter in SUMO2) cross-link involves residue K244. The 111-residue stretch at 289-399 (GFDVFMPKSQ…RRLKRGSAEV (111 aa)) folds into the BEN domain. T326 is subject to Phosphothreonine. The residue at position 330 (S330) is a Phosphoserine. The disordered stretch occupies residues 414–434 (TGHTFVIKRETPEDPEPGSVA).

The chain is BEN domain-containing protein 7 (Bend7) from Mus musculus (Mouse).